The primary structure comprises 442 residues: tRNA-2-methylthio-N(6)-dimethylallyladenosine synthase (442 aa).

One can recognise an MTTase N-terminal domain in the interval 2–120 (KKVFIRTFGC…LPKMIVDKET (119 aa)). Residues Cys-11, Cys-49, Cys-83, Cys-157, Cys-161, and Cys-164 each coordinate [4Fe-4S] cluster. Positions 143–375 (RVEGGAAFVS…NEVIEAETAR (233 aa)) constitute a Radical SAM core domain. The TRAM domain occupies 378-441 (QTMVGTVQRC…TFSLRGKVVE (64 aa)).

This sequence belongs to the methylthiotransferase family. MiaB subfamily. In terms of assembly, monomer. [4Fe-4S] cluster serves as cofactor.

It is found in the cytoplasm. The enzyme catalyses N(6)-dimethylallyladenosine(37) in tRNA + (sulfur carrier)-SH + AH2 + 2 S-adenosyl-L-methionine = 2-methylsulfanyl-N(6)-dimethylallyladenosine(37) in tRNA + (sulfur carrier)-H + 5'-deoxyadenosine + L-methionine + A + S-adenosyl-L-homocysteine + 2 H(+). Functionally, catalyzes the methylthiolation of N6-(dimethylallyl)adenosine (i(6)A), leading to the formation of 2-methylthio-N6-(dimethylallyl)adenosine (ms(2)i(6)A) at position 37 in tRNAs that read codons beginning with uridine. The sequence is that of tRNA-2-methylthio-N(6)-dimethylallyladenosine synthase from Neisseria meningitidis serogroup B (strain ATCC BAA-335 / MC58).